The following is a 68-amino-acid chain: Amphipathic peptide VmCT1 (68 aa).

The N-terminal stretch at 1–23 is a signal peptide; sequence MKTQFVILIVAVVLLQLISHSEA. Phe-36 is subject to Phenylalanine amide. The propeptide occupies 40–68; it reads GLRNFDDLDDTFEPEMSEADLKYLQDLLR.

The protein belongs to the non-disulfide-bridged peptide (NDBP) superfamily. Short antimicrobial peptide (group 4) family. In terms of tissue distribution, expressed by the venom gland.

It localises to the secreted. The protein resides in the target cell membrane. Cationic amphipathic peptide with antibacterial activities against both Gram-positive and Gram-negative bacteria. Also shows antifungal activities. Is mildly hemolytic against human erythrocytes. In addition, when tested in vitro on the parasite Trypanosoma cruzi (responsible of the Chagas disease), is able to reduce the number of the three forms (epimastigote, trypomastigote and amastigote). Also shows antiplasmodial and cytotoxic activity (tested on Plasmodium gallinaceum, and MCF-7 breast cancer cell line). In Vaejovis mexicanus smithi (Mexican scorpion), this protein is Amphipathic peptide VmCT1.